The sequence spans 503 residues: Aromatase 1 (503 aa).

Cys437 is a binding site for heme.

The protein belongs to the cytochrome P450 family. Heme is required as a cofactor.

It localises to the membrane. The catalysed reaction is testosterone + 3 reduced [NADPH--hemoprotein reductase] + 3 O2 = 17beta-estradiol + formate + 3 oxidized [NADPH--hemoprotein reductase] + 4 H2O + 4 H(+). It catalyses the reaction androst-4-ene-3,17-dione + 3 reduced [NADPH--hemoprotein reductase] + 3 O2 = estrone + formate + 3 oxidized [NADPH--hemoprotein reductase] + 4 H2O + 4 H(+). Its function is as follows. Catalyzes the formation of aromatic C18 estrogens from C19 androgens. The sequence is that of Aromatase 1 (CYP19A1) from Sus scrofa (Pig).